Reading from the N-terminus, the 821-residue chain is Tip elongation aberrant protein Tea4 (821 aa).

Composition is skewed to polar residues over residues 1 to 11 and 21 to 31; these read MLHMNSASSAD and DPTQQNDSTII. Positions 1 to 36 are disordered; the sequence is MLHMNSASSADSMEIMESHFDPTQQNDSTIIESRYS. Position 35 is a phosphotyrosine (tyrosine 35). Residue serine 36 is modified to Phosphoserine. At tyrosine 40 the chain carries Phosphotyrosine. The segment at 51–79 is disordered; sequence ISGENSEPQTVASQEISDSQEEDTTLTSS. Positions 53-67 are enriched in polar residues; the sequence is GENSEPQTVASQEIS. The SH3 domain maps to 130 to 191; sequence IDCNFVHAIR…PAEYIETPSE (62 aa). Disordered regions lie at residues 267 to 292, 333 to 352, 473 to 500, 529 to 570, and 664 to 697; these read LEIE…DHVT, SSTT…FSSA, DSFD…MPNN, SPRL…SSLL, and DASS…SFSS. Low complexity predominate over residues 268–282; sequence EIEFSDSSDSSLSAE. A compositionally biased stretch (basic and acidic residues) spans 283-292; sequence YRSESEDHVT. 2 stretches are compositionally biased toward polar residues: residues 333-350 and 473-484; these read SSTT…SKFS and DSFDTSNVTQDA. Positions 527–821 are interaction with tea1; that stretch reads LLSPRLYSSS…EMASLLNTNR (295 aa). Residues 529-541 show a composition bias toward low complexity; that stretch reads SPRLYSSSTPSSP. A compositionally biased stretch (basic and acidic residues) spans 554–563; that stretch reads ENRKQADKVE. The interval 599–821 is interaction with win1; it reads KAFSQSSIDL…EMASLLNTNR (223 aa). Residues 665 to 674 are compositionally biased toward low complexity; that stretch reads ASSAIPSSSI. Over residues 675–687 the composition is skewed to basic and acidic residues; it reads SHDEDLLPRKNTE.

In terms of assembly, an essential component of the tea1 cell-end complex. Interacts with win1, tea1 and for3. Interacts with tip1 in the presence of tea1.

It localises to the cytoplasm. The protein localises to the cytoskeleton. Cell polarity factor essential for the bipolar localization and function of structures containing the cell-end marker tea1 during the normal cell cycle. Regulates cell polarity in complex with tea1 and together with the stress signaling MAPK cascade, contributes to cell polarity maintenance under stress conditions. Required for the localization of for3 at the cell tip specifically during initiation of bipolar growth. During the new end take off (NETO), formation of a protein complex that includes tea1, tea4 and for3 is necessary and sufficient for the establishment of cell polarity and localized actin assembly at new cell ends. The polypeptide is Tip elongation aberrant protein Tea4 (Schizosaccharomyces pombe (strain 972 / ATCC 24843) (Fission yeast)).